Consider the following 140-residue polypeptide: Putative peptidyl-tRNA hydrolase PTRHD1 (140 aa).

This sequence belongs to the PTH2 family. PTRHD1 subfamily.

It carries out the reaction an N-acyl-L-alpha-aminoacyl-tRNA + H2O = an N-acyl-L-amino acid + a tRNA + H(+). Its function is as follows. As a putative peptidyl-tRNA hydrolase, it might be involved in releasing tRNAs from the ribosome during protein synthesis. Some evidence, however, suggests that it lacks peptidyl-tRNA hydrolase activity. The chain is Putative peptidyl-tRNA hydrolase PTRHD1 (Ptrhd1) from Mus musculus (Mouse).